We begin with the raw amino-acid sequence, 324 residues long: Olfactory receptor 4K15 (324 aa).

Topologically, residues 1–25 (MNETNHSRVTEFVLLGLSSSRELQP) are extracellular. N-linked (GlcNAc...) asparagine glycosylation is found at N2 and N5. The chain crosses the membrane as a helical span at residues 26–49 (FLFLTFSLLYLAILLGNFLIILTV). Residues 50-57 (TSDSRLHT) lie on the Cytoplasmic side of the membrane. A helical membrane pass occupies residues 58-79 (PMYFLLANLSFIDVCVASFATP). Topologically, residues 80-100 (KMIADFLVERKTISFDACLAQ) are extracellular. C97 and C189 form a disulfide bridge. Residues 101-120 (IFFVHLFTGSEMVLLVSMAY) form a helical membrane-spanning segment. Residues 121–139 (DRYVAICKPLHYMTVMSRR) are Cytoplasmic-facing. Residues 140 to 158 (VCVVLVLISWFVGFIHTTS) form a helical membrane-spanning segment. The Extracellular segment spans residues 159–195 (QLAFTVNLPFCGPNKVDSFFCDLPLVTKLACIDTYVV). The helical transmembrane segment at 196-219 (SLLIVADSGFLSLSSFLLLVVSYT) threads the bilayer. The Cytoplasmic segment spans residues 220 to 235 (VILVTVRNRSSASMAK). A helical transmembrane segment spans residues 236-258 (ARSTLTAHITVVTLFFGPCIFIY). At 259–269 (VWPFSSYSVDK) the chain is on the extracellular side. Residues 270-289 (VLAVFYTIFTLILNPVIYTL) traverse the membrane as a helical segment. At 290-324 (RNKEVKAAMSKLKSRYLKPSQVSVVIRNVLFLETK) the chain is on the cytoplasmic side.

It belongs to the G-protein coupled receptor 1 family.

The protein localises to the cell membrane. Functionally, odorant receptor. This is Olfactory receptor 4K15 (OR4K15) from Homo sapiens (Human).